Here is a 126-residue protein sequence, read N- to C-terminus: Fluoride-specific ion channel FluC (126 aa).

The next 4 helical transmembrane spans lie at 3-23 (PYLL…RFLI), 37-57 (VGTL…ALYF), 68-88 (LVIT…LETV), and 101-121 (TNIT…MMLF). 2 residues coordinate Na(+): Gly-75 and Thr-78.

This sequence belongs to the fluoride channel Fluc/FEX (TC 1.A.43) family.

It localises to the cell inner membrane. The enzyme catalyses fluoride(in) = fluoride(out). Na(+) is not transported, but it plays an essential structural role and its presence is essential for fluoride channel function. Its function is as follows. Fluoride-specific ion channel. Important for reducing fluoride concentration in the cell, thus reducing its toxicity. The sequence is that of Fluoride-specific ion channel FluC from Sulfurovum sp. (strain NBC37-1).